The chain runs to 457 residues: Transcription factor CP2-like protein 1 (457 aa).

The tract at residues 1–52 (MLFWHTQPEHYNQHNSGSYLRDVLALPIFKQEEPQLSPENEARLPPLQYVLC) is mediate transcriptional repression. The Grh/CP2 DB domain maps to 43–280 (RLPPLQYVLC…PSPSYNGSPN (238 aa)). Disordered regions lie at residues 219-245 (KPKGADRKQETDREKMEKRTAQEKEKY) and 271-301 (PSPSYNGSPNSFGLGEGNASPTHPVEALPVG). The segment covering 221 to 245 (KGADRKQETDREKMEKRTAQEKEKY) has biased composition (basic and acidic residues). The tract at residues 261 to 365 (PDVAYQVNSA…IRLFNAIKGR (105 aa)) is SAM2-like domain. Residues 271–281 (PSPSYNGSPNS) are compositionally biased toward polar residues.

The protein belongs to the grh/CP2 family. CP2 subfamily. As to quaternary structure, forms homohexamers via its SAM-like domain. Interacts with MTA1; which is indispensable for TFCP2L1-mediated self-renewal-promoting effect and endoderm-inhibiting action.

It is found in the nucleus. Transcription factor that facilitates establishment and maintenance of pluripotency in embryonic stem cells (ESCs). With KLF2, acts as the major effector of self-renewal that mediates induction of pluripotency downstream of LIF/STAT3 and Wnt/beta-catenin signaling. Required for normal duct development in the salivary gland and kidney. Coordinates the development of the kidney collecting ducts intercalated (IC) and principal (PC) cells, which regulate acid-base and salt-water homeostasis, respectively. Regulates the expression of IC genes including subunits B1 and D2 of the V-ATPase complex, OXGR1, CA12, SLC4A1, AQP6 and IC-specific transcription factor FOXI1. Also regulates the expression of JAG1 and subsequent notch signaling in the collecting duct. JAG1 initiates notch signaling in PCs but inhibits notch signaling in ICs. Acts as a transcriptional suppressor that may suppress UBP1-mediated transcriptional activation. Modulates the placental expression of CYP11A1. The chain is Transcription factor CP2-like protein 1 (TFCP2L1) from Pongo abelii (Sumatran orangutan).